The sequence spans 375 residues: 23S rRNA (uracil(747)-C(5))-methyltransferase RlmC (375 aa).

Cys3, Cys11, Cys14, and Cys87 together coordinate [4Fe-4S] cluster. S-adenosyl-L-methionine contacts are provided by Gln212, Phe241, Glu262, and Asn307. The active-site Nucleophile is Cys334.

The protein belongs to the class I-like SAM-binding methyltransferase superfamily. RNA M5U methyltransferase family. RlmC subfamily.

The enzyme catalyses uridine(747) in 23S rRNA + S-adenosyl-L-methionine = 5-methyluridine(747) in 23S rRNA + S-adenosyl-L-homocysteine + H(+). In terms of biological role, catalyzes the formation of 5-methyl-uridine at position 747 (m5U747) in 23S rRNA. The chain is 23S rRNA (uracil(747)-C(5))-methyltransferase RlmC from Salmonella arizonae (strain ATCC BAA-731 / CDC346-86 / RSK2980).